The following is a 46-amino-acid chain: GLFSKFNKKKIKSGLIKIIKTAGKEAGLEALRTGIDVIGCKIKGEC.

Cys-40 and Cys-46 form a disulfide bridge.

Expressed by the skin glands.

It localises to the secreted. Functionally, mast cell degranulating peptide. Causes histamine release from rat peritoneal mast cells in vitro. Has antibacterial activity against the Gram-negative bacterium E.coli K12 and Gram-positive bacterium M.luteus NCT C2665. The sequence is that of Esculentin-1SEa from Lithobates sevosus (Dusky gopher frog).